Here is a 147-residue protein sequence, read N- to C-terminus: uncharacterized protein (147 aa).

2 helical membrane passes run 35-55 (TIQL…FGNH) and 62-82 (IWLL…LFEP).

Has been detected in a cytochrome bc1-aa3 supercomplex; its deletion however leaves complex activity unaffected.

It localises to the cell membrane. This is an uncharacterized protein from Corynebacterium glutamicum (strain ATCC 13032 / DSM 20300 / JCM 1318 / BCRC 11384 / CCUG 27702 / LMG 3730 / NBRC 12168 / NCIMB 10025 / NRRL B-2784 / 534).